The chain runs to 178 residues: Translation initiation factor IF-3 (178 aa).

This sequence belongs to the IF-3 family. As to quaternary structure, monomer.

The protein localises to the cytoplasm. In terms of biological role, IF-3 binds to the 30S ribosomal subunit and shifts the equilibrium between 70S ribosomes and their 50S and 30S subunits in favor of the free subunits, thus enhancing the availability of 30S subunits on which protein synthesis initiation begins. In Picosynechococcus sp. (strain ATCC 27264 / PCC 7002 / PR-6) (Agmenellum quadruplicatum), this protein is Translation initiation factor IF-3.